Reading from the N-terminus, the 284-residue chain is Homeobox protein six1b (284 aa).

A DNA-binding region (homeobox) is located at residues 124 to 183 (GEETSYCFKEKSRGVLREWYTHNPYPSPREKRELAEATGLTTTQVSNWFKNRRQRDRAAE). Residues 167-238 (QVSNWFKNRR…NSVLLLQGNM (72 aa)) are disordered. Basic and acidic residues predominate over residues 179-190 (DRAAEAKERENS). Polar residues-rich tracts occupy residues 191–204 (ENNN…NQLS) and 226–238 (PDQN…QGNM).

This sequence belongs to the SIX/Sine oculis homeobox family. As to quaternary structure, interacts with eya1.

It localises to the nucleus. The protein localises to the cytoplasm. Its function is as follows. Transcription factor that is involved in the regulation of cell proliferation, apoptosis and embryonic development. Depending on context, functions as a transcriptional repressor or activator. Transcriptional activation is enhanced by eya1 (in vitro). Plays an important role in the development of the inner ear, where it promotes hair cell proliferation and inhibits proliferation of neural progenitor cells. Required for normal myogenesis. Plays a role in the development of fast muscle fibers throughout the body, as well as the development of craniofacial muscles. Required for normal expression of myod1 and myog during myogenesis. The sequence is that of Homeobox protein six1b (six1b) from Danio rerio (Zebrafish).